The chain runs to 95 residues: Aspartyl/glutamyl-tRNA(Asn/Gln) amidotransferase subunit C (95 aa).

Belongs to the GatC family. In terms of assembly, heterotrimer of A, B and C subunits.

It carries out the reaction L-glutamyl-tRNA(Gln) + L-glutamine + ATP + H2O = L-glutaminyl-tRNA(Gln) + L-glutamate + ADP + phosphate + H(+). The catalysed reaction is L-aspartyl-tRNA(Asn) + L-glutamine + ATP + H2O = L-asparaginyl-tRNA(Asn) + L-glutamate + ADP + phosphate + 2 H(+). Functionally, allows the formation of correctly charged Asn-tRNA(Asn) or Gln-tRNA(Gln) through the transamidation of misacylated Asp-tRNA(Asn) or Glu-tRNA(Gln) in organisms which lack either or both of asparaginyl-tRNA or glutaminyl-tRNA synthetases. The reaction takes place in the presence of glutamine and ATP through an activated phospho-Asp-tRNA(Asn) or phospho-Glu-tRNA(Gln). The protein is Aspartyl/glutamyl-tRNA(Asn/Gln) amidotransferase subunit C of Bradyrhizobium diazoefficiens (strain JCM 10833 / BCRC 13528 / IAM 13628 / NBRC 14792 / USDA 110).